A 192-amino-acid polypeptide reads, in one-letter code: Peptide deformylase (192 aa).

Fe cation-binding residues include C102 and H145. The active site involves E146. H149 provides a ligand contact to Fe cation.

It belongs to the polypeptide deformylase family. Fe(2+) is required as a cofactor.

The enzyme catalyses N-terminal N-formyl-L-methionyl-[peptide] + H2O = N-terminal L-methionyl-[peptide] + formate. Functionally, removes the formyl group from the N-terminal Met of newly synthesized proteins. Requires at least a dipeptide for an efficient rate of reaction. N-terminal L-methionine is a prerequisite for activity but the enzyme has broad specificity at other positions. The polypeptide is Peptide deformylase (Thermus thermophilus (strain ATCC BAA-163 / DSM 7039 / HB27)).